A 200-amino-acid chain; its full sequence is Glutathione S-transferase domain-containing protein DDB_G0273153/DDB_G0273923 (200 aa).

A GST N-terminal domain is found at 1-71 (MISSIYIFKI…YISNNHNFSG (71 aa)). The 123-residue stretch at 73 to 195 (SLQESARVDD…INSNNINSQS (123 aa)) folds into the GST C-terminal domain.

It belongs to the GST superfamily.

The protein is Glutathione S-transferase domain-containing protein DDB_G0273153/DDB_G0273923 of Dictyostelium discoideum (Social amoeba).